Consider the following 394-residue polypeptide: ATP phosphoribosyltransferase regulatory subunit (394 aa).

The protein belongs to the class-II aminoacyl-tRNA synthetase family. HisZ subfamily. In terms of assembly, heteromultimer composed of HisG and HisZ subunits.

Its subcellular location is the cytoplasm. It functions in the pathway amino-acid biosynthesis; L-histidine biosynthesis; L-histidine from 5-phospho-alpha-D-ribose 1-diphosphate: step 1/9. Functionally, required for the first step of histidine biosynthesis. May allow the feedback regulation of ATP phosphoribosyltransferase activity by histidine. In Geobacillus thermodenitrificans (strain NG80-2), this protein is ATP phosphoribosyltransferase regulatory subunit.